Reading from the N-terminus, the 323-residue chain is tRNA dimethylallyltransferase (323 aa).

12–19 (GPTAAGKT) contributes to the ATP binding site. Residue 14-19 (TAAGKT) participates in substrate binding. 2 interaction with substrate tRNA regions span residues 37 to 40 (DSAL) and 161 to 165 (QRLSR).

The protein belongs to the IPP transferase family. In terms of assembly, monomer. The cofactor is Mg(2+).

The enzyme catalyses adenosine(37) in tRNA + dimethylallyl diphosphate = N(6)-dimethylallyladenosine(37) in tRNA + diphosphate. In terms of biological role, catalyzes the transfer of a dimethylallyl group onto the adenine at position 37 in tRNAs that read codons beginning with uridine, leading to the formation of N6-(dimethylallyl)adenosine (i(6)A). The sequence is that of tRNA dimethylallyltransferase from Pseudomonas fluorescens (strain SBW25).